The chain runs to 893 residues: Eukaryotic translation initiation factor 3 subunit A (893 aa).

In terms of domain architecture, PCI spans 319–502 (LQRMAAHVLL…NSIFFGTDLT (184 aa)). Coiled coils occupy residues 576-707 (QKII…RAKR) and 784-881 (EIAL…REVA). Disordered stretches follow at residues 592–634 (AREL…EIQA) and 837–893 (AEAR…RRRQ). The segment covering 837-881 (AEARRLEREAEDEKRRQQYEKQRAKEEEAERKIQEDRDRLAREVA) has biased composition (basic and acidic residues).

Belongs to the eIF-3 subunit A family. In terms of assembly, component of the eukaryotic translation initiation factor 3 (eIF-3) complex. The eIF-3 complex interacts with pix.

The protein resides in the cytoplasm. Its function is as follows. RNA-binding component of the eukaryotic translation initiation factor 3 (eIF-3) complex, which is involved in protein synthesis of a specialized repertoire of mRNAs and, together with other initiation factors, stimulates binding of mRNA and methionyl-tRNAi to the 40S ribosome. The eIF-3 complex specifically targets and initiates translation of a subset of mRNAs involved in cell proliferation. The protein is Eukaryotic translation initiation factor 3 subunit A of Drosophila grimshawi (Hawaiian fruit fly).